A 237-amino-acid polypeptide reads, in one-letter code: Ribosomal RNA small subunit methyltransferase G (237 aa).

S-adenosyl-L-methionine contacts are provided by residues Gly78, Phe83, 129-130 (AE), and Arg148.

The protein belongs to the methyltransferase superfamily. RNA methyltransferase RsmG family.

The protein localises to the cytoplasm. Its function is as follows. Specifically methylates the N7 position of a guanine in 16S rRNA. The protein is Ribosomal RNA small subunit methyltransferase G of Streptococcus thermophilus (strain ATCC BAA-491 / LMD-9).